A 443-amino-acid chain; its full sequence is ATP-dependent protease ATPase subunit HslU (443 aa).

ATP is bound by residues Val18, 60 to 65 (GVGKTE), Asp255, Glu321, and Arg393.

Belongs to the ClpX chaperone family. HslU subfamily. In terms of assembly, a double ring-shaped homohexamer of HslV is capped on each side by a ring-shaped HslU homohexamer. The assembly of the HslU/HslV complex is dependent on binding of ATP.

Its subcellular location is the cytoplasm. Its function is as follows. ATPase subunit of a proteasome-like degradation complex; this subunit has chaperone activity. The binding of ATP and its subsequent hydrolysis by HslU are essential for unfolding of protein substrates subsequently hydrolyzed by HslV. HslU recognizes the N-terminal part of its protein substrates and unfolds these before they are guided to HslV for hydrolysis. The protein is ATP-dependent protease ATPase subunit HslU of Colwellia psychrerythraea (strain 34H / ATCC BAA-681) (Vibrio psychroerythus).